The primary structure comprises 158 residues: MIVIGFDPGTAITGYGILNKEDDKIAVIEYGALTTPSNWSIGRRLNYLFDQVSSLLDLYNPDAVVMEEVFFNKNIKTAISIGQAQGVIILAAQQHQREVSILTPLEVKLSVVGYGRATKDQVQYMVKEVLKLKDIPKPDDVADALALCISYIYKQEGC.

Catalysis depends on residues Asp7, Glu67, and Asp140. 3 residues coordinate Mg(2+): Asp7, Glu67, and Asp140.

It belongs to the RuvC family. Homodimer which binds Holliday junction (HJ) DNA. The HJ becomes 2-fold symmetrical on binding to RuvC with unstacked arms; it has a different conformation from HJ DNA in complex with RuvA. In the full resolvosome a probable DNA-RuvA(4)-RuvB(12)-RuvC(2) complex forms which resolves the HJ. The cofactor is Mg(2+).

Its subcellular location is the cytoplasm. It carries out the reaction Endonucleolytic cleavage at a junction such as a reciprocal single-stranded crossover between two homologous DNA duplexes (Holliday junction).. Its function is as follows. The RuvA-RuvB-RuvC complex processes Holliday junction (HJ) DNA during genetic recombination and DNA repair. Endonuclease that resolves HJ intermediates. Cleaves cruciform DNA by making single-stranded nicks across the HJ at symmetrical positions within the homologous arms, yielding a 5'-phosphate and a 3'-hydroxyl group; requires a central core of homology in the junction. The consensus cleavage sequence is 5'-(A/T)TT(C/G)-3'. Cleavage occurs on the 3'-side of the TT dinucleotide at the point of strand exchange. HJ branch migration catalyzed by RuvA-RuvB allows RuvC to scan DNA until it finds its consensus sequence, where it cleaves and resolves the cruciform DNA. This chain is Crossover junction endodeoxyribonuclease RuvC, found in Dictyoglomus thermophilum (strain ATCC 35947 / DSM 3960 / H-6-12).